The primary structure comprises 318 residues: Inner membrane protein YbhN (318 aa).

The Periplasmic portion of the chain corresponds to 1–13; the sequence is MSKSHPRWRLAKK. Residues 14 to 34 traverse the membrane as a helical segment; the sequence is ILTWLFFIAVIVLLVVYAKKV. The Cytoplasmic segment spans residues 35 to 50; the sequence is DWEEVWKVIRDYNRVA. Residues 51-71 traverse the membrane as a helical segment; it reads LLSAVGLVVVSYLIYGCYDLL. Over 72-85 the chain is Periplasmic; that stretch reads ARFYCGHKLAKRQV. A helical transmembrane segment spans residues 86–106; it reads MLVSFICYAFNLTLSTWVGGI. Residues 107–125 are Cytoplasmic-facing; the sequence is GMRYRLYSRLGLPGSTITR. A helical transmembrane segment spans residues 126 to 146; it reads IFSLSITTNWLGYILLAGIIF. Residues 147-165 are Periplasmic-facing; sequence TAGVVELPDHWYVDQTTLR. A helical membrane pass occupies residues 166 to 186; that stretch reads ILGIGLLMIIAVYLWFCAFAK. The Cytoplasmic portion of the chain corresponds to 187-205; that stretch reads HRHMTIKGQKLVLPSWKFA. Residues 206-226 form a helical membrane-spanning segment; sequence LAQMLISSVNWMVMGAIIWLL. Residues 227–233 lie on the Periplasmic side of the membrane; sequence LGQSVNY. The next 2 membrane-spanning stretches (helical) occupy residues 234 to 254 and 255 to 275; these read FFVL…HIPA and GIGV…TSKG. At 276–277 the chain is on the periplasmic side; it reads TI. A helical membrane pass occupies residues 278–298; it reads IAALLAYRVLYYFIPLLLALI. Topologically, residues 299-318 are cytoplasmic; the sequence is CYLLLESQAKKLRAKNEAAM.

This sequence to Synechocystis PCC 6803 slr0712.

The protein localises to the cell inner membrane. The polypeptide is Inner membrane protein YbhN (ybhN) (Escherichia coli (strain K12)).